The chain runs to 236 residues: Leucyl/phenylalanyl-tRNA--protein transferase (236 aa).

Belongs to the L/F-transferase family.

The protein resides in the cytoplasm. It carries out the reaction N-terminal L-lysyl-[protein] + L-leucyl-tRNA(Leu) = N-terminal L-leucyl-L-lysyl-[protein] + tRNA(Leu) + H(+). The enzyme catalyses N-terminal L-arginyl-[protein] + L-leucyl-tRNA(Leu) = N-terminal L-leucyl-L-arginyl-[protein] + tRNA(Leu) + H(+). The catalysed reaction is L-phenylalanyl-tRNA(Phe) + an N-terminal L-alpha-aminoacyl-[protein] = an N-terminal L-phenylalanyl-L-alpha-aminoacyl-[protein] + tRNA(Phe). In terms of biological role, functions in the N-end rule pathway of protein degradation where it conjugates Leu, Phe and, less efficiently, Met from aminoacyl-tRNAs to the N-termini of proteins containing an N-terminal arginine or lysine. This is Leucyl/phenylalanyl-tRNA--protein transferase from Shewanella halifaxensis (strain HAW-EB4).